The following is a 116-amino-acid chain: uncharacterized protein (116 aa).

This sequence belongs to the BolA/IbaG family.

The protein localises to the mitochondrion. This is an uncharacterized protein from Schizosaccharomyces pombe (strain 972 / ATCC 24843) (Fission yeast).